The sequence spans 313 residues: tRNA(Ile)-lysidine synthase (313 aa).

Position 37–42 (37–42) interacts with ATP; sequence SGGPDS.

Belongs to the tRNA(Ile)-lysidine synthase family.

Its subcellular location is the cytoplasm. The enzyme catalyses cytidine(34) in tRNA(Ile2) + L-lysine + ATP = lysidine(34) in tRNA(Ile2) + AMP + diphosphate + H(+). Functionally, ligates lysine onto the cytidine present at position 34 of the AUA codon-specific tRNA(Ile) that contains the anticodon CAU, in an ATP-dependent manner. Cytidine is converted to lysidine, thus changing the amino acid specificity of the tRNA from methionine to isoleucine. The protein is tRNA(Ile)-lysidine synthase of Corynebacterium efficiens (strain DSM 44549 / YS-314 / AJ 12310 / JCM 11189 / NBRC 100395).